A 92-amino-acid polypeptide reads, in one-letter code: Large ribosomal subunit protein eL34 (92 aa).

Belongs to the eukaryotic ribosomal protein eL34 family.

The sequence is that of Large ribosomal subunit protein eL34 from Staphylothermus marinus (strain ATCC 43588 / DSM 3639 / JCM 9404 / F1).